Consider the following 277-residue polypeptide: Release factor glutamine methyltransferase (277 aa).

S-adenosyl-L-methionine-binding positions include 117 to 121, Asp140, Trp168, and Asn183; that span reads GTGTG. Position 183–186 (183–186) interacts with substrate; sequence NPPY.

This sequence belongs to the protein N5-glutamine methyltransferase family. PrmC subfamily.

It catalyses the reaction L-glutaminyl-[peptide chain release factor] + S-adenosyl-L-methionine = N(5)-methyl-L-glutaminyl-[peptide chain release factor] + S-adenosyl-L-homocysteine + H(+). Its function is as follows. Methylates the class 1 translation termination release factors RF1/PrfA and RF2/PrfB on the glutamine residue of the universally conserved GGQ motif. The chain is Release factor glutamine methyltransferase from Salmonella typhimurium (strain LT2 / SGSC1412 / ATCC 700720).